Reading from the N-terminus, the 432-residue chain is Enolase (432 aa).

Gln167 contributes to the (2R)-2-phosphoglycerate binding site. Catalysis depends on Glu209, which acts as the Proton donor. Residues Asp246, Glu289, and Asp316 each coordinate Mg(2+). Positions 341, 370, 371, and 392 each coordinate (2R)-2-phosphoglycerate. Lys341 serves as the catalytic Proton acceptor.

The protein belongs to the enolase family. The cofactor is Mg(2+).

The protein resides in the cytoplasm. Its subcellular location is the secreted. It localises to the cell surface. It catalyses the reaction (2R)-2-phosphoglycerate = phosphoenolpyruvate + H2O. The protein operates within carbohydrate degradation; glycolysis; pyruvate from D-glyceraldehyde 3-phosphate: step 4/5. Functionally, catalyzes the reversible conversion of 2-phosphoglycerate (2-PG) into phosphoenolpyruvate (PEP). It is essential for the degradation of carbohydrates via glycolysis. The polypeptide is Enolase (Thermotoga neapolitana (strain ATCC 49049 / DSM 4359 / NBRC 107923 / NS-E)).